A 512-amino-acid chain; its full sequence is NAD-dependent deacetylase sir2A (512 aa).

The UBP-type zinc-finger motif lies at 7–110; sequence IECIHLKDEY…EILENIKSSN (104 aa). The Zn(2+) site is built by Cys-9, His-11, Cys-34, Cys-37, Cys-46, Cys-49, Cys-54, His-61, His-65, His-71, Cys-84, and Cys-87. Residues 113–122 show a composition bias toward basic and acidic residues; it reads DKIVPKKDQK. The tract at residues 113–196 is disordered; sequence DKIVPKKDQK…DESSSEGEES (84 aa). Positions 130-175 are enriched in low complexity; that stretch reads VVPSASITTSSTTTSISKQTTVNNTTTTSSSSTTTTTTTTSTTINN. A compositionally biased stretch (acidic residues) spans 176–195; the sequence is NEEEEESESETDESSSEGEE. The region spanning 231 to 503 is the Deacetylase sirtuin-type domain; it reads CVLKKPTIEE…LDLIKLLGWE (273 aa). His-361 serves as the catalytic Proton acceptor. Residues Cys-369, Cys-372, Cys-393, and Cys-399 each contribute to the Zn(2+) site.

This sequence belongs to the sirtuin family. Zn(2+) is required as a cofactor.

It catalyses the reaction N(6)-acetyl-L-lysyl-[protein] + NAD(+) + H2O = 2''-O-acetyl-ADP-D-ribose + nicotinamide + L-lysyl-[protein]. NAD-dependent deacetylase, which plays an important role in the regulation of transcriptional repression. The chain is NAD-dependent deacetylase sir2A (sir2A) from Dictyostelium discoideum (Social amoeba).